The chain runs to 473 residues: Siroheme synthase (473 aa).

Positions 1–203 are precorrin-2 dehydrogenase /sirohydrochlorin ferrochelatase; sequence MTLFPIFADL…QQPGLAEQEL (203 aa). NAD(+)-binding positions include 22–23 and 43–44; these read AV and PR. Ser128 is subject to Phosphoserine. Residues 216–473 are uroporphyrinogen-III C-methyltransferase; that stretch reads GSVVLVGAGP…GLPGPQALAA (258 aa). Pro225 is an S-adenosyl-L-methionine binding site. Asp248 acts as the Proton acceptor in catalysis. Residue Lys270 is the Proton donor of the active site. Residues 302–304, Ile307, 332–333, Met384, and Gly413 each bind S-adenosyl-L-methionine; these read GGD and TA.

The protein in the N-terminal section; belongs to the precorrin-2 dehydrogenase / sirohydrochlorin ferrochelatase family. In the C-terminal section; belongs to the precorrin methyltransferase family.

The enzyme catalyses uroporphyrinogen III + 2 S-adenosyl-L-methionine = precorrin-2 + 2 S-adenosyl-L-homocysteine + H(+). The catalysed reaction is precorrin-2 + NAD(+) = sirohydrochlorin + NADH + 2 H(+). It carries out the reaction siroheme + 2 H(+) = sirohydrochlorin + Fe(2+). The protein operates within cofactor biosynthesis; adenosylcobalamin biosynthesis; precorrin-2 from uroporphyrinogen III: step 1/1. It participates in cofactor biosynthesis; adenosylcobalamin biosynthesis; sirohydrochlorin from precorrin-2: step 1/1. Its pathway is porphyrin-containing compound metabolism; siroheme biosynthesis; precorrin-2 from uroporphyrinogen III: step 1/1. It functions in the pathway porphyrin-containing compound metabolism; siroheme biosynthesis; siroheme from sirohydrochlorin: step 1/1. The protein operates within porphyrin-containing compound metabolism; siroheme biosynthesis; sirohydrochlorin from precorrin-2: step 1/1. Functionally, multifunctional enzyme that catalyzes the SAM-dependent methylations of uroporphyrinogen III at position C-2 and C-7 to form precorrin-2 via precorrin-1. Then it catalyzes the NAD-dependent ring dehydrogenation of precorrin-2 to yield sirohydrochlorin. Finally, it catalyzes the ferrochelation of sirohydrochlorin to yield siroheme. This Bordetella pertussis (strain Tohama I / ATCC BAA-589 / NCTC 13251) protein is Siroheme synthase.